The chain runs to 356 residues: NADH-quinone oxidoreductase subunit H (356 aa).

9 helical membrane passes run 22-42 (GVVS…TAYL), 59-79 (PSLA…KLVF), 93-113 (FIIA…VIPI), 124-144 (IGGI…IIIA), 171-191 (MALS…IQIV), 198-218 (PIWL…SILA), 240-260 (VEYS…NMIL), 285-305 (IPGY…FLWI), and 321-341 (GLKV…TILV).

It belongs to the complex I subunit 1 family. In terms of assembly, NDH-1 is composed of 14 different subunits. Subunits NuoA, H, J, K, L, M, N constitute the membrane sector of the complex.

The protein localises to the cell inner membrane. The enzyme catalyses a quinone + NADH + 5 H(+)(in) = a quinol + NAD(+) + 4 H(+)(out). Its function is as follows. NDH-1 shuttles electrons from NADH, via FMN and iron-sulfur (Fe-S) centers, to quinones in the respiratory chain. The immediate electron acceptor for the enzyme in this species is believed to be ubiquinone. Couples the redox reaction to proton translocation (for every two electrons transferred, four hydrogen ions are translocated across the cytoplasmic membrane), and thus conserves the redox energy in a proton gradient. This subunit may bind ubiquinone. The polypeptide is NADH-quinone oxidoreductase subunit H (Orientia tsutsugamushi (strain Boryong) (Rickettsia tsutsugamushi)).